The chain runs to 88 residues: Protein GOLVEN 10 (88 aa).

A signal peptide spans Met1–Ser22. A propeptide spanning residues Arg23–Ala75 is cleaved from the precursor. Residues Val44 to Asn88 are disordered. A Sulfotyrosine modification is found at Tyr77. Pro85 is subject to Hydroxyproline.

The protein belongs to the RGF family. As to quaternary structure, binds to LRR receptor-like serine/threonine-protein kinases RGI1, RGI2 and RGI3 to trigger their dimerization with SERK proteins and subsequent signaling. Expressed in roots, shoots, leaves and flowers.

The protein localises to the secreted. Its subcellular location is the endoplasmic reticulum. In terms of biological role, signaling peptide (root growth factor) that maintains the postembryonic root stem cell niche. Regulates the pattern of root growth and lateral root development by modulating the length and the number of cortical cells in the root apical meristem (RAM), and the anticlinal asymmetric cell divisions in lateral root initiation cells. This is Protein GOLVEN 10 from Arabidopsis thaliana (Mouse-ear cress).